Here is a 376-residue protein sequence, read N- to C-terminus: Putative glutamate--cysteine ligase 2 (376 aa).

This sequence belongs to the glutamate--cysteine ligase type 2 family. YbdK subfamily.

It catalyses the reaction L-cysteine + L-glutamate + ATP = gamma-L-glutamyl-L-cysteine + ADP + phosphate + H(+). ATP-dependent carboxylate-amine ligase which exhibits weak glutamate--cysteine ligase activity. In Corynebacterium glutamicum (strain R), this protein is Putative glutamate--cysteine ligase 2.